Here is an 879-residue protein sequence, read N- to C-terminus: Autophagy-related protein 9 (879 aa).

A disordered region spans residues 1 to 56 (MGKGEGYLDPTILSVASGSRNSGKGKERTRRKGGHKYHSLHVQDEEEEEPPESDAL). The segment covering 27 to 39 (ERTRRKGGHKYHS) has biased composition (basic residues). The helical transmembrane segment at 104-124 (VLNLLTTFFVIAFSTFLISCI) threads the bilayer. N-linked (GlcNAc...) asparagine glycans are attached at residues Asn-163 and Asn-166. The chain crosses the membrane as a helical span at residues 180-200 (LFLIILSAFFIFQVASFAMSV). An intramembrane segment occupies 385-405 (FIFMGILNAIFAPFIILYLLI). Helical transmembrane passes span 455 to 475 (FVAF…LIDP) and 488 to 508 (TVLF…GMVP). The stretch at 555 to 575 (IMIFFSELLSVILTPFILFFS) is an intramembrane region. Disordered stretches follow at residues 620–666 (ETGL…DWRG) and 763–825 (WAKS…EEER). Over residues 632–657 (GPAADGFAAGKPSRPTTRRTTSSSPS) the composition is skewed to low complexity. The span at 798–817 (EGDKGDDSIDGWSKRVKTDG) shows a compositional bias: basic and acidic residues.

This sequence belongs to the ATG9 family. As to quaternary structure, homotrimer; forms a homotrimer with a central pore that forms a path between the two membrane leaflets. Phosphorylated by ATG1. ATG1 phosphorylation is required for preautophagosome elongation.

It is found in the preautophagosomal structure membrane. Its subcellular location is the cytoplasmic vesicle membrane. The protein resides in the golgi apparatus membrane. The protein localises to the endoplasmic reticulum membrane. The enzyme catalyses a 1,2-diacyl-sn-glycero-3-phosphocholine(in) = a 1,2-diacyl-sn-glycero-3-phosphocholine(out). It catalyses the reaction a 1,2-diacyl-sn-glycero-3-phospho-L-serine(in) = a 1,2-diacyl-sn-glycero-3-phospho-L-serine(out). It carries out the reaction a 1,2-diacyl-sn-glycero-3-phosphoethanolamine(in) = a 1,2-diacyl-sn-glycero-3-phosphoethanolamine(out). The catalysed reaction is a 1,2-diacyl-sn-glycero-3-phospho-(1D-myo-inositol-3-phosphate)(in) = a 1,2-diacyl-sn-glycero-3-phospho-(1D-myo-inositol-3-phosphate)(out). Its function is as follows. Phospholipid scramblase involved in autophagy and cytoplasm to vacuole transport (Cvt) vesicle formation. Cycles between the preautophagosomal structure/phagophore assembly site (PAS) and the cytoplasmic vesicle pool and supplies membrane for the growing autophagosome. Lipid scramblase activity plays a key role in preautophagosomal structure/phagophore assembly by distributing the phospholipids that arrive through ATG2 from the cytoplasmic to the luminal leaflet of the bilayer, thereby driving autophagosomal membrane expansion. Required for mitophagy. Also involved in endoplasmic reticulum-specific autophagic process and is essential for the survival of cells subjected to severe ER stress. Different machineries are required for anterograde trafficking to the PAS during either the Cvt pathway or bulk autophagy and for retrograde trafficking. This is Autophagy-related protein 9 (ATG9) from Cryptococcus neoformans var. neoformans serotype D (strain B-3501A) (Filobasidiella neoformans).